The primary structure comprises 250 residues: 3-deoxy-manno-octulosonate cytidylyltransferase (250 aa).

This sequence belongs to the KdsB family.

Its subcellular location is the cytoplasm. It catalyses the reaction 3-deoxy-alpha-D-manno-oct-2-ulosonate + CTP = CMP-3-deoxy-beta-D-manno-octulosonate + diphosphate. It participates in nucleotide-sugar biosynthesis; CMP-3-deoxy-D-manno-octulosonate biosynthesis; CMP-3-deoxy-D-manno-octulosonate from 3-deoxy-D-manno-octulosonate and CTP: step 1/1. The protein operates within bacterial outer membrane biogenesis; lipopolysaccharide biosynthesis. Functionally, activates KDO (a required 8-carbon sugar) for incorporation into bacterial lipopolysaccharide in Gram-negative bacteria. This is 3-deoxy-manno-octulosonate cytidylyltransferase from Thioalkalivibrio sulfidiphilus (strain HL-EbGR7).